Here is a 104-residue protein sequence, read N- to C-terminus: Large ribosomal subunit protein uL24 (104 aa).

Belongs to the universal ribosomal protein uL24 family. In terms of assembly, part of the 50S ribosomal subunit.

Functionally, one of two assembly initiator proteins, it binds directly to the 5'-end of the 23S rRNA, where it nucleates assembly of the 50S subunit. In terms of biological role, one of the proteins that surrounds the polypeptide exit tunnel on the outside of the subunit. The polypeptide is Large ribosomal subunit protein uL24 (Methylobacterium radiotolerans (strain ATCC 27329 / DSM 1819 / JCM 2831 / NBRC 15690 / NCIMB 10815 / 0-1)).